The primary structure comprises 205 residues: Ribonuclease HII (205 aa).

The RNase H type-2 domain occupies 14 to 205 (SLISGIDEAG…SFRLKQLGEK (192 aa)). Residues Asp-20, Glu-21, and Asp-117 each coordinate a divalent metal cation.

It belongs to the RNase HII family. Requires Mn(2+) as cofactor. Mg(2+) serves as cofactor.

The protein localises to the cytoplasm. The catalysed reaction is Endonucleolytic cleavage to 5'-phosphomonoester.. In terms of biological role, endonuclease that specifically degrades the RNA of RNA-DNA hybrids. The protein is Ribonuclease HII of Chlorobium phaeobacteroides (strain DSM 266 / SMG 266 / 2430).